A 350-amino-acid chain; its full sequence is RNA 3'-terminal phosphate cyclase (350 aa).

ATP-binding positions include Gln-107 and 290–294 (FLGDQ). His-316 acts as the Tele-AMP-histidine intermediate in catalysis.

This sequence belongs to the RNA 3'-terminal cyclase family. Type 1 subfamily.

The protein resides in the cytoplasm. It carries out the reaction a 3'-end 3'-phospho-ribonucleotide-RNA + ATP = a 3'-end 2',3'-cyclophospho-ribonucleotide-RNA + AMP + diphosphate. Catalyzes the conversion of 3'-phosphate to a 2',3'-cyclic phosphodiester at the end of RNA. The mechanism of action of the enzyme occurs in 3 steps: (A) adenylation of the enzyme by ATP; (B) transfer of adenylate to an RNA-N3'P to produce RNA-N3'PP5'A; (C) and attack of the adjacent 2'-hydroxyl on the 3'-phosphorus in the diester linkage to produce the cyclic end product. The biological role of this enzyme is unknown but it is likely to function in some aspects of cellular RNA processing. The sequence is that of RNA 3'-terminal phosphate cyclase from Gloeothece citriformis (strain PCC 7424) (Cyanothece sp. (strain PCC 7424)).